Here is a 102-residue protein sequence, read N- to C-terminus: Large ribosomal subunit protein uL24 (102 aa).

Belongs to the universal ribosomal protein uL24 family. Part of the 50S ribosomal subunit.

Functionally, one of two assembly initiator proteins, it binds directly to the 5'-end of the 23S rRNA, where it nucleates assembly of the 50S subunit. In terms of biological role, one of the proteins that surrounds the polypeptide exit tunnel on the outside of the subunit. This Leuconostoc mesenteroides subsp. mesenteroides (strain ATCC 8293 / DSM 20343 / BCRC 11652 / CCM 1803 / JCM 6124 / NCDO 523 / NBRC 100496 / NCIMB 8023 / NCTC 12954 / NRRL B-1118 / 37Y) protein is Large ribosomal subunit protein uL24.